The following is a 110-amino-acid chain: UPF0060 membrane protein Mmwyl1_1139 (110 aa).

The next 4 membrane-spanning stretches (helical) occupy residues isoleucine 7–tryptophan 27, threonine 33–leucine 53, alanine 63–isoleucine 83, and threonine 87–proline 107.

This sequence belongs to the UPF0060 family.

The protein resides in the cell inner membrane. This is UPF0060 membrane protein Mmwyl1_1139 from Marinomonas sp. (strain MWYL1).